Reading from the N-terminus, the 841-residue chain is Protein translocase subunit SecA (841 aa).

Residues 79-80 (MF), Gln85, 103-107 (GEGKT), and Asp492 contribute to the ATP site. Positions 786–813 (REEVVQGQTTAHQPQEGDDNKKAKKAPV) are disordered. Zn(2+)-binding residues include Cys825, Cys827, Cys836, and Cys837.

It belongs to the SecA family. In terms of assembly, part of the essential Sec protein translocation apparatus which comprises SecA, SecYEG and auxiliary proteins SecDF. Other proteins may be involved. Monomer and many different homodimers can be isolated, some of which are not formed in the presence of a synthetic signal peptide. A single SecA monomer interacts with SecY in the channel. Only shows some colocalization with FloA or FloT membrane assemblies. Requires Zn(2+) as cofactor.

It is found in the cell membrane. The protein localises to the cytoplasm. The protein resides in the membrane raft. The enzyme catalyses ATP + H2O + cellular proteinSide 1 = ADP + phosphate + cellular proteinSide 2.. In terms of biological role, part of the Sec protein translocase complex. Interacts with the SecYEG preprotein conducting channel. Has a central role in coupling the hydrolysis of ATP to the transfer of proteins into and across the cell membrane, serving as an ATP-driven molecular motor driving the stepwise translocation of polypeptide chains across the membrane. This chain is Protein translocase subunit SecA, found in Bacillus subtilis (strain 168).